The sequence spans 334 residues: Procathepsin L (334 aa).

Positions 1–17 (MNLLLLLAVLCLGTALA) are cleaved as a signal peptide. Positions 18-113 (TPKFDQTFSA…RLFQEPLMLK (96 aa)) are cleaved as a propeptide — activation peptide. Glu-122 serves as a coordination point for Zn(2+). 2 disulfide bridges follow: Cys-135/Cys-178 and Cys-169/Cys-211. Cys-138 is an active-site residue. Zn(2+) contacts are provided by Glu-163, Asp-184, Glu-199, and Glu-205. Asn-221 carries N-linked (GlcNAc...) (high mannose) asparagine glycosylation. Zn(2+) is bound by residues Asp-227, Asp-250, His-253, and Asp-275. A disulfide bridge connects residues Cys-269 and Cys-322. Residue His-276 is part of the active site. Positions 289–290 (DS) are excised as a propeptide. The active site involves Asn-300.

This sequence belongs to the peptidase C1 family. Dimer of a heavy and a light chain linked by disulfide bonds. Interacts with Long isoform of CD74/Ii chain; the interaction stabilizes the conformation of mature CTSL. In terms of processing, during export along the endocytic pathway, pro-CTSL undergoes several proteolytic cleavages to generate the CTSL single-chain and two-chain mature forms, composed of a heavy chain linked to a light chain by disulfide bonds. Autocleavage; produces the single-chain CTSL after cleavage of the propeptide. The cleavage can be intermolecular. In terms of tissue distribution, expressed in thymus, kidney and liver. Expressed in thyroid epithelial cells. Expressed in cortical thymic epithelial cells. Expressed by antigen presenting cells (APCs) such as dendritic cells and macrophages.

The protein resides in the lysosome. The protein localises to the apical cell membrane. It is found in the secreted. It localises to the extracellular space. Its subcellular location is the cytoplasmic vesicle. The protein resides in the secretory vesicle. The protein localises to the chromaffin granule. It carries out the reaction Specificity close to that of papain. As compared to cathepsin B, cathepsin L exhibits higher activity toward protein substrates, but has little activity on Z-Arg-Arg-NHMec, and no peptidyl-dipeptidase activity.. With respect to regulation, long isoform of CD74/Ii chain stabilizes the conformation of mature CTSL by binding to its active site and serving as a chaperone to help maintain a pool of mature enzyme in endocytic compartments and extracellular space of APCs. IFNG enhances the conversion into the CTSL mature and active form. Inhibited by CST6. Inhibited by the glycopeptide antibiotic teicoplanin. Inhibited by amantadine. Functionally, thiol protease important for the overall degradation of proteins in lysosomes. Involved in the solubilization of cross-linked TG/thyroglobulin and in the subsequent release of thyroid hormone thyroxine (T4) by limited proteolysis of TG/thyroglobulin in the thyroid follicle lumen. In neuroendocrine chromaffin cells secretory vesicles, catalyzes the prohormone proenkephalin processing to the active enkephalin peptide neurotransmitter. In thymus, regulates CD4(+) T cell positive selection by generating the major histocompatibility complex class II (MHCII) bound peptide ligands presented by cortical thymic epithelial cells. Also mediates invariant chain processing in cortical thymic epithelial cells. Major elastin-degrading enzyme at neutral pH. Accumulates as a mature and active enzyme in the extracellular space of antigen presenting cells (APCs) to regulate degradation of the extracellular matrix in the course of inflammation. Secreted form generates endostatin from COL18A1. Critical for cardiac morphology and function. Plays an important role in hair follicle morphogenesis and cycling, as well as epidermal differentiation. Required for maximal stimulation of steroidogenesis by TIMP1. This is Procathepsin L from Mus musculus (Mouse).